A 271-amino-acid chain; its full sequence is MAFKFKTFAAVGALIGSLALAGCGQDEKDPNHIKVGVIVGAEQQVAEVAQKVAKEKYGLDVELVTFNDYVLPNEALSKGDIDANAFQHKPYLDQQIKDRGYKLVSVGKTFVYPIAGYSKKIKSLDELKDGSQVAVPNDPTNLGRSLLLLQKVGLIKLKDGVSLLPTSLDIVENPKNLKIVELEAPQLPRSLDDAQIALAVINTTYASQIGLTPAKDGIFVEDKDSPYVNLIVTREDNKDAENVKKFVQAYQSDEVYEAANKVFNGGAVKGW.

Residues 1 to 22 form the signal peptide; it reads MAFKFKTFAAVGALIGSLALAG. The N-palmitoyl cysteine moiety is linked to residue C23. C23 carries S-diacylglycerol cysteine lipidation.

This sequence belongs to the NlpA lipoprotein family.

The protein resides in the cell membrane. Functionally, this protein is a component of a D-methionine permease, a binding protein-dependent, ATP-driven transport system. This chain is D-methionine-binding lipoprotein MetQ (metQ), found in Salmonella typhi.